The primary structure comprises 164 residues: Probable ribosome biogenesis protein RLP24 (164 aa).

The protein belongs to the eukaryotic ribosomal protein eL24 family. As to quaternary structure, associated with nucleolar and cytoplasmic pre-60S particles. At the end of biogenesis it dissociates from cytoplasmic pre-60S particles and is likely to be exchanged for its ribosomal homolog, RPL24.

The protein localises to the cytoplasm. It localises to the nucleus. Functionally, involved in the biogenesis of the 60S ribosomal subunit. Ensures the docking of nog1 to pre-60S particles. Activates and recruits ATPase AFG2 to cytoplasmic pre-60S ribosomal particles. The polypeptide is Probable ribosome biogenesis protein RLP24 (rlp24) (Dictyostelium discoideum (Social amoeba)).